The primary structure comprises 123 residues: Fluoride-specific ion channel FluC 2 (123 aa).

4 helical membrane passes run 3–23 (LDGF…RMFI), 38–58 (ILIV…LNIT), 62–82 (LILF…SFIY), and 94–114 (LILL…FCLG). 2 residues coordinate Na(+): G72 and S75.

This sequence belongs to the fluoride channel Fluc/FEX (TC 1.A.43) family.

The protein resides in the cell inner membrane. It carries out the reaction fluoride(in) = fluoride(out). Na(+) is not transported, but it plays an essential structural role and its presence is essential for fluoride channel function. Its function is as follows. Fluoride-specific ion channel. Important for reducing fluoride concentration in the cell, thus reducing its toxicity. This Prochlorococcus marinus subsp. pastoris (strain CCMP1986 / NIES-2087 / MED4) protein is Fluoride-specific ion channel FluC 2.